The primary structure comprises 501 residues: MAPALHWLLLWVGSGMLPAQGTHLGIRLPLRSGLAGPPLGLRLPRETDEESEEPGRRGSFVEMVDNLRGKSGQGYYVEMTVGSPPQTLNILVDTGSSNFAVGAAPHPFLHRYYQRQLSSTYRDLRKGVYVPYTQGKWEGELGTDLVSIPHGPNVTVRANIAAITESDKFFINGSNWEGILGLAYAEIARPDDSLEPFFDSLVKQTHIPNIFSLQLCGAGFPLNQTEALASVGGSMIIGGIDHSLYTGSLWYTPIRREWYYEVIIVRVEINGQDLKMDCKEYNYDKSIVDSGTTNLRLPKKVFEAAVKSIKAASSTEKFPDGFWLGEQLVCWQAGTTPWNIFPVISLYLMGEVTNQSFRITILPQQYLRPVEDVATSQDDCYKFAVSQSSTGTVMGAVIMEGFYVVFDRARKRIGFAVSACHVHDEFRTAAVEGPFVTADMEDCGYNIPQTDESTLMTIAYVMAAICALFMLPLCLMVCQWRCLRCLRHQHDDFADDISLLK.

The N-terminal stretch at 1–21 (MAPALHWLLLWVGSGMLPAQG) is a signal peptide. The propeptide occupies 22–45 (THLGIRLPLRSGLAGPPLGLRLPR). Over 22–457 (THLGIRLPLR…PQTDESTLMT (436 aa)) the chain is Extracellular. Positions 39–58 (LGLRLPRETDEESEEPGRRG) are disordered. The Peptidase A1 domain occupies 75–416 (YYVEMTVGSP…DRARKRIGFA (342 aa)). Residue Asp-93 is part of the active site. The residue at position 126 (Lys-126) is an N6-acetyllysine. N-linked (GlcNAc...) asparagine glycans are attached at residues Asn-153, Asn-172, and Asn-223. 3 cysteine pairs are disulfide-bonded: Cys-216–Cys-420, Cys-278–Cys-443, and Cys-330–Cys-380. Lys-275, Lys-279, and Lys-285 each carry N6-acetyllysine. Asp-289 is a catalytic residue. Residues Lys-299, Lys-300, and Lys-307 each carry the N6-acetyllysine modification. Residue Asn-354 is glycosylated (N-linked (GlcNAc...) asparagine). A helical transmembrane segment spans residues 458–478 (IAYVMAAICALFMLPLCLMVC). S-palmitoyl cysteine attachment occurs at residues Cys-474, Cys-478, Cys-482, and Cys-485. Over 479–501 (QWRCLRCLRHQHDDFADDISLLK) the chain is Cytoplasmic. The interaction with RTN3 stretch occupies residues 479 to 501 (QWRCLRCLRHQHDDFADDISLLK). The DXXLL motif lies at 496–500 (DISLL). Ser-498 bears the Phosphoserine mark. Lys-501 participates in a covalent cross-link: Glycyl lysine isopeptide (Lys-Gly) (interchain with G-Cter in ubiquitin).

The protein belongs to the peptidase A1 family. Monomer. Interacts (via DXXLL motif) with GGA1, GGA2 and GGA3 (via their VHS domain); the interaction highly increases when BACE1 is phosphorylated at Ser-498. Interacts with RTN1; RTN2; RTN3 and RTN4; the interaction leads to inhibition of amyloid precursor protein processing. Interacts with SNX6. Interacts with PCSK9. Interacts with NAT8 and NAT8B. Interacts with BIN1. Interacts (via extracellular domain) with ADAM10 (via extracellular domain). Interacts with SORL1; this interaction may affect binding with APP and hence reduce APP cleavage. Interacts with NRDC AND NRG1. N-Glycosylated. Addition of a bisecting N-acetylglucosamine by MGAT3 blocks lysosomal targeting, further degradation and is required for maintaining stability under stress conditions. In terms of processing, palmitoylation mediates lipid raft localization. Post-translationally, acetylated in the endoplasmic reticulum at Lys-126, Lys-275, Lys-279, Lys-285, Lys-299, Lys-300 and Lys-307. Acetylation by NAT8 and NAT8B is transient and deacetylation probably occurs in the Golgi. Acetylation regulates the maturation, the transport to the plasma membrane, the stability and the expression of the protein. Ubiquitinated at Lys-501, ubiquitination leads to lysosomal degradation. Monoubiquitinated and 'Lys-63'-linked polyubitinated. Deubiquitnated by USP8; inhibits lysosomal degradation. In terms of processing, phosphorylation at Ser-498 is required for interaction with GGA1 and retrograded transport from endosomal compartments to the trans-Golgi network. Non-phosphorylated BACE1 enters a direct recycling route to the cell surface. As to expression, expressed in the brain, specifically in neurons and astrocytes (at protein level).

The protein resides in the cell membrane. It localises to the golgi apparatus. The protein localises to the trans-Golgi network. It is found in the endoplasmic reticulum. Its subcellular location is the endosome. The protein resides in the late endosome. It localises to the early endosome. The protein localises to the cell surface. It is found in the cytoplasmic vesicle membrane. Its subcellular location is the membrane raft. The protein resides in the lysosome. It localises to the recycling endosome. The protein localises to the cell projection. It is found in the axon. Its subcellular location is the dendrite. It carries out the reaction Broad endopeptidase specificity. Cleaves Glu-Val-Asn-Leu-|-Asp-Ala-Glu-Phe in the Swedish variant of Alzheimer's amyloid precursor protein.. Inhibited by RTN3 and RTN4. Responsible for the proteolytic processing of the amyloid precursor protein (APP). Cleaves at the N-terminus of the A-beta peptide sequence, between residues 671 and 672 of APP, leads to the generation and extracellular release of beta-cleaved soluble APP, and a corresponding cell-associated C-terminal fragment which is later released by gamma-secretase. Cleaves CHL1. The polypeptide is Beta-secretase 1 (Mus musculus (Mouse)).